The following is a 74-amino-acid chain: Exodeoxyribonuclease 7 small subunit (74 aa).

It belongs to the XseB family. As to quaternary structure, heterooligomer composed of large and small subunits.

It is found in the cytoplasm. It carries out the reaction Exonucleolytic cleavage in either 5'- to 3'- or 3'- to 5'-direction to yield nucleoside 5'-phosphates.. In terms of biological role, bidirectionally degrades single-stranded DNA into large acid-insoluble oligonucleotides, which are then degraded further into small acid-soluble oligonucleotides. The sequence is that of Exodeoxyribonuclease 7 small subunit from Thermotoga neapolitana (strain ATCC 49049 / DSM 4359 / NBRC 107923 / NS-E).